The primary structure comprises 122 residues: Large ribosomal subunit protein uL14 (122 aa).

The protein belongs to the universal ribosomal protein uL14 family. As to quaternary structure, part of the 50S ribosomal subunit. Forms a cluster with proteins L3 and L19. In the 70S ribosome, L14 and L19 interact and together make contacts with the 16S rRNA in bridges B5 and B8.

Its function is as follows. Binds to 23S rRNA. Forms part of two intersubunit bridges in the 70S ribosome. This Saccharopolyspora erythraea (strain ATCC 11635 / DSM 40517 / JCM 4748 / NBRC 13426 / NCIMB 8594 / NRRL 2338) protein is Large ribosomal subunit protein uL14.